A 311-amino-acid polypeptide reads, in one-letter code: UDP-N-acetylenolpyruvoylglucosamine reductase (311 aa).

Residues Lys-28–Gly-197 enclose the FAD-binding PCMH-type domain. Residue Arg-177 is part of the active site. Ser-226 acts as the Proton donor in catalysis. The active site involves Glu-296.

It belongs to the MurB family. It depends on FAD as a cofactor.

The protein resides in the cytoplasm. It catalyses the reaction UDP-N-acetyl-alpha-D-muramate + NADP(+) = UDP-N-acetyl-3-O-(1-carboxyvinyl)-alpha-D-glucosamine + NADPH + H(+). It functions in the pathway cell wall biogenesis; peptidoglycan biosynthesis. In terms of biological role, cell wall formation. In Magnetococcus marinus (strain ATCC BAA-1437 / JCM 17883 / MC-1), this protein is UDP-N-acetylenolpyruvoylglucosamine reductase.